The following is a 185-amino-acid chain: NEDD8-conjugating enzyme UBE2F (185 aa).

Residues 1–21 (MLTLASKLKRDDGVKGSRTTS) are disordered. Residues 1–29 (MLTLASKLKRDDGVKGSRTTSTTLDSMRR) are interaction with uba3. Positions 32 to 185 (VRDRLLVKEV…VEDYIKRYAR (154 aa)) constitute a UBC core domain. The Glycyl thioester intermediate role is filled by cysteine 116.

Belongs to the ubiquitin-conjugating enzyme family. UBE2F subfamily.

It carries out the reaction [E1 NEDD8-activating enzyme]-S-[NEDD8 protein]-yl-L-cysteine + [E2 NEDD8-conjugating enzyme]-L-cysteine = [E1 NEDD8-activating enzyme]-L-cysteine + [E2 NEDD8-conjugating enzyme]-S-[NEDD8-protein]-yl-L-cysteine.. It functions in the pathway protein modification; protein neddylation. Functionally, accepts the ubiquitin-like protein NEDD8 from the UBA3-NAE1 E1 complex and catalyzes its covalent attachment to other proteins. Together with the E3 ubiquitin ligase rnf7/rbx2, specifically neddylates cullin-5 (cul5). Does not neddylate cul1, cul2, cul3, cul4a or cul4b. The sequence is that of NEDD8-conjugating enzyme UBE2F (ube2f) from Xenopus laevis (African clawed frog).